A 515-amino-acid chain; its full sequence is Fatty acyl-CoA reductase 1 (515 aa).

The Cytoplasmic segment spans residues M1–N465. Residues S451–F507 are necessary and sufficient for PEX19-mediated localization into peroxisome membrane. Residues I466 to I483 form a helical membrane-spanning segment. Over A484–Y515 the chain is Peroxisomal.

This sequence belongs to the fatty acyl-CoA reductase family. In terms of assembly, interacts with PEX19; PEX19 mediates the targeting of FAR1 to peroxisomes.

Its subcellular location is the peroxisome membrane. The enzyme catalyses a long-chain fatty acyl-CoA + 2 NADPH + 2 H(+) = a long-chain primary fatty alcohol + 2 NADP(+) + CoA. The catalysed reaction is hexadecanoyl-CoA + 2 NADPH + 2 H(+) = hexadecan-1-ol + 2 NADP(+) + CoA. It catalyses the reaction octadecanoyl-CoA + 2 NADPH + 2 H(+) = octadecan-1-ol + 2 NADP(+) + CoA. It carries out the reaction (9Z)-octadecenoyl-CoA + 2 NADPH + 2 H(+) = (9Z)-octadecen-1-ol + 2 NADP(+) + CoA. The enzyme catalyses (9Z,12Z)-octadecadienoyl-CoA + 2 NADPH + 2 H(+) = (9Z,12Z)-octadecadien-1-ol + 2 NADP(+) + CoA. The catalysed reaction is eicosanoyl-CoA + 2 NADPH + 2 H(+) = eicosan-1-ol + 2 NADP(+) + CoA. It catalyses the reaction 16-methylheptadecanoyl-CoA + 2 NADPH + 2 H(+) = 16-methylheptadecan-1-ol + 2 NADP(+) + CoA. It carries out the reaction 18-methylnonadecanoyl-CoA + 2 NADPH + 2 H(+) = 18-methylnonadecan-1-ol + 2 NADP(+) + CoA. Functionally, catalyzes the reduction of saturated and unsaturated C16 or C18 fatty acyl-CoA to fatty alcohols. It plays an essential role in the production of ether lipids/plasmalogens which synthesis requires fatty alcohols. In parallel, it is also required for wax monoesters production since fatty alcohols also constitute a substrate for their synthesis. The sequence is that of Fatty acyl-CoA reductase 1 from Pongo abelii (Sumatran orangutan).